The following is a 341-amino-acid chain: UDP-N-acetyl-alpha-D-glucosaminouronate 4-epimerase (341 aa).

NAD(+) is bound by residues Phe-27, Ile-28, Asp-47, Ala-50, Thr-51, Gly-52, Asp-78, Ile-79, and Gln-98. Residue Ser-103 participates in UDP-N-acetyl-alpha-D-galactosamine binding. Thr-117 contacts NAD(+). Residues Ser-142, Ser-143, and Tyr-166 each coordinate UDP-N-acetyl-alpha-D-galactosamine. Residues Tyr-166 and Lys-170 each coordinate NAD(+). Tyr-166 functions as the Proton acceptor in the catalytic mechanism. Residue Asn-195 participates in UDP-N-acetyl-alpha-D-galactosamine binding. Val-196 serves as a coordination point for NAD(+). 6 residues coordinate UDP-N-acetyl-alpha-D-galactosamine: Val-210, Tyr-225, Asn-227, Arg-234, Arg-299, and Asp-302.

This sequence belongs to the NAD(P)-dependent epimerase/dehydratase family. As to quaternary structure, homodimer. NAD(+) serves as cofactor.

It carries out the reaction UDP-2-acetamido-2-deoxy-alpha-D-glucuronate = UDP-2-acetamido-2-deoxy-alpha-D-galacturonate. The catalysed reaction is UDP-N-acetyl-alpha-D-glucosamine = UDP-N-acetyl-alpha-D-galactosamine. It participates in bacterial outer membrane biogenesis; LPS O-antigen biosynthesis. Functionally, epimerase required for the biosynthesis of the B-band O antigen of serotype O6 lipopolysaccharide. Catalyzes the reversible epimerization of UDP-N-acetylglucosaminuronic acid (UDP-GlcNAcA) to UDP-N-acetylgalactosaminuronic acid (UDP-GalNAcA). Also catalyzes the reversible epimerization of UDP-N-acetylglucosamine (UDP-GlcNAc) to UDP-N-acetylgalactosamine (UDP-GalNAc). Has very low epimerase activity with UDP-glucose (UDP-Glc) and UDP-galactose (UDP-Gal). In Pseudomonas aeruginosa, this protein is UDP-N-acetyl-alpha-D-glucosaminouronate 4-epimerase.